The primary structure comprises 141 residues: Hemoglobin subunit alpha-D (141 aa).

In terms of domain architecture, Globin spans 1 to 141 (MLSADDKKII…VAAVLAEKYR (141 aa)). Heme b contacts are provided by H58 and H87.

The protein belongs to the globin family. Heterotetramer of two alpha-D chains and two beta chains. Red blood cells.

Its function is as follows. Involved in oxygen transport from the lung to the various peripheral tissues. The chain is Hemoglobin subunit alpha-D (HBAD) from Anser indicus (Bar-headed goose).